A 1076-amino-acid chain; its full sequence is Nickel and cobalt resistance protein CnrA (1076 aa).

A run of 12 helical transmembrane segments spans residues 14-34 (WLVLFLTAVVAVIGAWQLNLL), 366-386 (TVAKNLIEGALLVVAILFALL), 390-410 (RAATIAALVIPLSLLVSAIGM), 418-438 (NLMSLGALDFGLIIDGAVIIV), 475-495 (PTVYGQLVIFMVFLPCLTFQG), 502-522 (SPMVITLMLALASAFVLSLTF), 561-581 (PMPFIGAGIATVAVATVAFTF), 903-923 (RLAIIVPLCFILIAATLYMAI), 928-948 (LTATVLTAVPLALAGGVFALL), 959-979 (AVGFIAVSGVAVLNGLVLISA), 1003-1023 (RPVLMTALVASLGFVPMAIAT), and 1035-1055 (TVVIGGLVTATVLTLFVLPAL).

Belongs to the resistance-nodulation-cell division (RND) (TC 2.A.6) family.

It is found in the cell inner membrane. The products of the genes cnrA, cnrB, and cnrC are likely to form a membrane-bound protein complex catalyzing an energy-dependent efflux of Ni(2+) and Co(2+). The mechanism of action of the CnrCBA complex may be that of a proton/cation antiporter. This Cupriavidus metallidurans (strain ATCC 43123 / DSM 2839 / NBRC 102507 / CH34) (Ralstonia metallidurans) protein is Nickel and cobalt resistance protein CnrA (cnrA).